The following is a 184-amino-acid chain: Small ribosomal subunit protein bS16 (184 aa).

Residues 150 to 160 (KKAAEAAEKAA) show a composition bias toward basic and acidic residues. A disordered region spans residues 150–184 (KKAAEAAEKAAAEAPAEEATEAPAEEAAATEAAAE). The span at 164 to 173 (PAEEATEAPA) shows a compositional bias: acidic residues. Positions 174-184 (EEAAATEAAAE) are enriched in low complexity.

The protein belongs to the bacterial ribosomal protein bS16 family.

The protein is Small ribosomal subunit protein bS16 of Bacteroides thetaiotaomicron (strain ATCC 29148 / DSM 2079 / JCM 5827 / CCUG 10774 / NCTC 10582 / VPI-5482 / E50).